The primary structure comprises 463 residues: 23S rRNA (uracil(1939)-C(5))-methyltransferase RlmD (463 aa).

The TRAM domain occupies 6 to 76 (KSRKPQQPEY…KRLEEAEMVA (71 aa)). The [4Fe-4S] cluster site is built by Cys90, Cys96, Cys99, and Cys178. 6 residues coordinate S-adenosyl-L-methionine: Gln288, Phe317, Asn322, Glu341, Asp368, and Asp389. The Nucleophile role is filled by Cys415.

Belongs to the class I-like SAM-binding methyltransferase superfamily. RNA M5U methyltransferase family. RlmD subfamily.

It carries out the reaction uridine(1939) in 23S rRNA + S-adenosyl-L-methionine = 5-methyluridine(1939) in 23S rRNA + S-adenosyl-L-homocysteine + H(+). In terms of biological role, catalyzes the formation of 5-methyl-uridine at position 1939 (m5U1939) in 23S rRNA. The polypeptide is 23S rRNA (uracil(1939)-C(5))-methyltransferase RlmD (Acinetobacter baumannii (strain ACICU)).